The primary structure comprises 1240 residues: ABC transporter B family member 17 (1240 aa).

In terms of domain architecture, ABC transmembrane type-1 1 spans M35–E324. A helical membrane pass occupies residues A36–F56. N-linked (GlcNAc...) asparagine glycosylation occurs at N70. 5 consecutive transmembrane segments (helical) span residues V81 to C101, L158 to W180, I184 to S206, G264 to G284, and G296 to L316. The ABC transporter 1 domain maps to V359–S595. An ATP-binding site is contributed by G394 to S401. 3 N-linked (GlcNAc...) asparagine glycosylation sites follow: N542, N609, and N642. Positions A672–R960 constitute an ABC transmembrane type-1 2 domain. A run of 2 helical transmembrane segments spans residues L681–F701 and I714–H734. N769 is a glycosylation site (N-linked (GlcNAc...) asparagine). 4 consecutive transmembrane segments (helical) span residues M793 to W815, L817 to L839, W896 to Y919, and L923 to T943. The ABC transporter 2 domain maps to I995–A1233. A glycan (N-linked (GlcNAc...) asparagine) is linked at N1015. G1030–S1037 contributes to the ATP binding site.

The protein belongs to the ABC transporter superfamily. ABCB family. Multidrug resistance exporter (TC 3.A.1.201) subfamily.

The protein resides in the membrane. The protein is ABC transporter B family member 17 (ABCB17) of Arabidopsis thaliana (Mouse-ear cress).